The following is a 176-amino-acid chain: 3-hydroxydecanoyl-[acyl-carrier-protein] dehydratase (176 aa).

The active site involves histidine 75.

This sequence belongs to the thioester dehydratase family. FabA subfamily. In terms of assembly, homodimer.

The protein resides in the cytoplasm. It catalyses the reaction a (3R)-hydroxyacyl-[ACP] = a (2E)-enoyl-[ACP] + H2O. The enzyme catalyses (3R)-hydroxydecanoyl-[ACP] = (2E)-decenoyl-[ACP] + H2O. It carries out the reaction (2E)-decenoyl-[ACP] = (3Z)-decenoyl-[ACP]. It participates in lipid metabolism; fatty acid biosynthesis. Functionally, necessary for the introduction of cis unsaturation into fatty acids. Catalyzes the dehydration of (3R)-3-hydroxydecanoyl-ACP to E-(2)-decenoyl-ACP and then its isomerization to Z-(3)-decenoyl-ACP. Can catalyze the dehydratase reaction for beta-hydroxyacyl-ACPs with saturated chain lengths up to 16:0, being most active on intermediate chain length. This Actinobacillus pleuropneumoniae serotype 5b (strain L20) protein is 3-hydroxydecanoyl-[acyl-carrier-protein] dehydratase.